Here is a 404-residue protein sequence, read N- to C-terminus: Sodium/glutamate symporter (404 aa).

Helical transmembrane passes span Phe5 to Val25, Thr33 to Trp53, Thr69 to Ile89, Leu95 to Ala115, Ile161 to Ala181, Ser219 to Val239, Ala245 to Leu265, Ala277 to Leu297, Ile307 to Ile327, Ala338 to Ala358, and Ala373 to Leu393.

The protein belongs to the glutamate:Na(+) symporter (ESS) (TC 2.A.27) family.

It localises to the cell inner membrane. Its function is as follows. Catalyzes the sodium-dependent transport of glutamate. The chain is Sodium/glutamate symporter from Haemophilus influenzae (strain ATCC 51907 / DSM 11121 / KW20 / Rd).